Reading from the N-terminus, the 217-residue chain is MNLILLGPPGAGKGTQAKLLIKRFQIPQISTGDILRAAVSEMTPMGVKAKGYMESGALVPDEVVVGIVRERLEKNDCLNGFILDGFPRTVAQADALKHMLVCMNMSIEHVVSMAVDKEELLQRITGRRTCRLCGKGYHVVFDPPRVSGRCDECLGELFQRDDDQEETMRKRLDVYEDQTAPLITYYENESLLRSIAGVGSIDDIQQRILSIIQGTHG.

10 to 15 is an ATP binding site; it reads GAGKGT. The NMP stretch occupies residues 30 to 59; the sequence is STGDILRAAVSEMTPMGVKAKGYMESGALV. AMP is bound by residues Thr31, Arg36, 57–59, 85–88, and Gln92; these read ALV and GFPR. The tract at residues 126 to 163 is LID; sequence GRRTCRLCGKGYHVVFDPPRVSGRCDECLGELFQRDDD. ATP is bound at residue Arg127. Residues Cys130, Cys133, Cys150, and Cys153 each coordinate Zn(2+). AMP contacts are provided by Arg160 and Arg171. Residue Gly199 coordinates ATP.

This sequence belongs to the adenylate kinase family. Monomer.

The protein resides in the cytoplasm. It carries out the reaction AMP + ATP = 2 ADP. Its pathway is purine metabolism; AMP biosynthesis via salvage pathway; AMP from ADP: step 1/1. Catalyzes the reversible transfer of the terminal phosphate group between ATP and AMP. Plays an important role in cellular energy homeostasis and in adenine nucleotide metabolism. The protein is Adenylate kinase of Geotalea uraniireducens (strain Rf4) (Geobacter uraniireducens).